A 199-amino-acid polypeptide reads, in one-letter code: Recombination protein RecR (199 aa).

A C4-type zinc finger spans residues 57–72; that stretch reads CSSCRTFTEESLCPIC. A Toprim domain is found at 81–176; that stretch reads DLICVVETPA…NVSRIAHGVP (96 aa).

The protein belongs to the RecR family.

Functionally, may play a role in DNA repair. It seems to be involved in an RecBC-independent recombinational process of DNA repair. It may act with RecF and RecO. This chain is Recombination protein RecR, found in Shewanella loihica (strain ATCC BAA-1088 / PV-4).